The following is a 694-amino-acid chain: Follicle-stimulating hormone receptor (694 aa).

The first 17 residues, 1 to 17, serve as a signal peptide directing secretion; it reads MALLLVSLLAFLSLGSG. 2 disulfides stabilise this stretch: cysteine 18-cysteine 25 and cysteine 23-cysteine 32. Positions 18–46 constitute an LRRNT domain; sequence CHHRVCHCSNRVFLCQESKVTEIPSDLPR. The Extracellular segment spans residues 18-365; that stretch reads CHHRVCHCSN…EDIMGYDILR (348 aa). LRR repeat units lie at residues 49–72, 73–97, 98–118, 119–143, 144–169, 170–192, 193–216, 217–240, and 241–259; these read LELR…FGDL, EKIE…LPKL, HEIR…AFQN, LPNL…KIQS, LQKV…MGLS, FEST…AFNG, TQLD…VFQG, ASGP…GLEN, and LKKL…PSLE. N-linked (GlcNAc...) asparagine glycans are attached at residues asparagine 191 and asparagine 199. A glycan (N-linked (GlcNAc...) asparagine) is linked at asparagine 268. 4 disulfides stabilise this stretch: cysteine 275–cysteine 345, cysteine 276–cysteine 292, cysteine 276–cysteine 355, and cysteine 292–cysteine 337. N-linked (GlcNAc...) asparagine glycosylation is present at asparagine 293. Residue tyrosine 334 is modified to Sulfotyrosine. The chain crosses the membrane as a helical span at residues 366–386; the sequence is VLIWFISILAITGNIIVLVIL. Residues 387 to 397 lie on the Cytoplasmic side of the membrane; that stretch reads ITSQYKLTVPR. The chain crosses the membrane as a helical span at residues 398–420; that stretch reads FLMCNLAFADLCIGIYLLLIASV. The Extracellular portion of the chain corresponds to 421–442; the sequence is DIHTKSQYHNYAIDWQTGAGCD. Residues cysteine 441 and cysteine 516 are joined by a disulfide bond. A helical membrane pass occupies residues 443 to 464; that stretch reads AAGFFTVFASELSVYTLTAITL. The Cytoplasmic portion of the chain corresponds to 465-484; sequence ERWHTITHAMQLECKVQLRH. A helical transmembrane segment spans residues 485 to 507; it reads AASVMLVGWIFAFAVALLPIFGI. Residues 508 to 527 are Extracellular-facing; the sequence is STYMKVSICLPMDIDSPLSQ. Residues 528 to 549 form a helical membrane-spanning segment; sequence LYVMSLLVLNVLAFVVICGCYI. The Cytoplasmic portion of the chain corresponds to 550–572; sequence HIYLTVRNPNIVSSSSDTKIAKR. A helical membrane pass occupies residues 573–596; the sequence is MAILIFTDFLCMAPISFFAISASL. Topologically, residues 597–607 are extracellular; sequence KVPLITVSKSK. Residues 608-629 traverse the membrane as a helical segment; the sequence is ILLVLFYPINSCANPFLYAIFT. Residues 630-694 are Cytoplasmic-facing; the sequence is KNFRRDFFIL…LVPLSHLAQN (65 aa).

It belongs to the G-protein coupled receptor 1 family. FSH/LSH/TSH subfamily. Homotrimer. Functions as a homotrimer binding the FSH hormone heterodimer composed of CGA and FSHB. Interacts with ARRB2. Interacts with APPL2; interaction is independent of follicle stimulating hormone stimulation. Post-translationally, N-glycosylated; indirectly required for FSH-binding, possibly via a conformational change that allows high affinity binding of hormone. In terms of processing, sulfated.

It localises to the cell membrane. Functionally, g protein-coupled receptor for follitropin, the follicle-stimulating hormone. Through cAMP production activates the downstream PI3K-AKT and ERK1/ERK2 signaling pathways. In Equus caballus (Horse), this protein is Follicle-stimulating hormone receptor (FSHR).